The sequence spans 966 residues: Integrator complex subunit 7 (966 aa).

Residues Ser338 and Ser809 each carry the phosphoserine modification. A disordered region spans residues Leu941–Phe966.

Belongs to the Integrator subunit 7 family. As to quaternary structure, component of the Integrator complex, composed of core subunits INTS1, INTS2, INTS3, INTS4, INTS5, INTS6, INTS7, INTS8, INTS9/RC74, INTS10, INTS11/CPSF3L, INTS12, INTS13, INTS14 and INTS15. The core complex associates with protein phosphatase 2A subunits PPP2CA and PPP2R1A, to form the Integrator-PP2A (INTAC) complex. Interacts with NABP2.

Its subcellular location is the nucleus. It localises to the chromosome. The protein resides in the cytoplasm. Component of the integrator complex, a multiprotein complex that terminates RNA polymerase II (Pol II) transcription in the promoter-proximal region of genes. The integrator complex provides a quality checkpoint during transcription elongation by driving premature transcription termination of transcripts that are unfavorably configured for transcriptional elongation: the complex terminates transcription by (1) catalyzing dephosphorylation of the C-terminal domain (CTD) of Pol II subunit POLR2A/RPB1 and SUPT5H/SPT5, (2) degrading the exiting nascent RNA transcript via endonuclease activity and (3) promoting the release of Pol II from bound DNA. The integrator complex is also involved in terminating the synthesis of non-coding Pol II transcripts, such as enhancer RNAs (eRNAs), small nuclear RNAs (snRNAs), telomerase RNAs and long non-coding RNAs (lncRNAs). May be not involved in the recruitment of cytoplasmic dynein to the nuclear envelope by different components of the INT complex. Plays a role in DNA damage response (DDR) signaling during the S phase. The chain is Integrator complex subunit 7 (Ints7) from Mus musculus (Mouse).